Here is a 1222-residue protein sequence, read N- to C-terminus: ATP-dependent helicase/nuclease subunit A (1222 aa).

A UvrD-like helicase ATP-binding domain is found at 39-495; sequence QKRTAQQIEA…ILLKENFRSQ (457 aa). 60–67 lines the ATP pocket; the sequence is ASAGSGKT. The UvrD-like helicase C-terminal domain maps to 524 to 810; sequence QLIAGSHAQT…NLMTIHKSKG (287 aa).

This sequence belongs to the helicase family. AddA subfamily. In terms of assembly, heterodimer of AddA and AddB/RexB. Mg(2+) serves as cofactor.

It catalyses the reaction Couples ATP hydrolysis with the unwinding of duplex DNA by translocating in the 3'-5' direction.. It carries out the reaction ATP + H2O = ADP + phosphate + H(+). Functionally, the heterodimer acts as both an ATP-dependent DNA helicase and an ATP-dependent, dual-direction single-stranded exonuclease. Recognizes the chi site generating a DNA molecule suitable for the initiation of homologous recombination. The AddA nuclease domain is required for chi fragment generation; this subunit has the helicase and 3' -&gt; 5' nuclease activities. This chain is ATP-dependent helicase/nuclease subunit A, found in Streptococcus pyogenes serotype M12 (strain MGAS9429).